A 448-amino-acid chain; its full sequence is Probable glycine dehydrogenase (decarboxylating) subunit 1 (448 aa).

It belongs to the GcvP family. N-terminal subunit subfamily. In terms of assembly, the glycine cleavage system is composed of four proteins: P, T, L and H. In this organism, the P 'protein' is a heterodimer of two subunits.

The enzyme catalyses N(6)-[(R)-lipoyl]-L-lysyl-[glycine-cleavage complex H protein] + glycine + H(+) = N(6)-[(R)-S(8)-aminomethyldihydrolipoyl]-L-lysyl-[glycine-cleavage complex H protein] + CO2. Its function is as follows. The glycine cleavage system catalyzes the degradation of glycine. The P protein binds the alpha-amino group of glycine through its pyridoxal phosphate cofactor; CO(2) is released and the remaining methylamine moiety is then transferred to the lipoamide cofactor of the H protein. The chain is Probable glycine dehydrogenase (decarboxylating) subunit 1 from Bacillus licheniformis (strain ATCC 14580 / DSM 13 / JCM 2505 / CCUG 7422 / NBRC 12200 / NCIMB 9375 / NCTC 10341 / NRRL NRS-1264 / Gibson 46).